Reading from the N-terminus, the 62-residue chain is Large ribosomal subunit protein bL28 (62 aa).

The tract at residues 1–22 is disordered; it reads MAKKCAISGKGPMSGNNVSHAK.

Belongs to the bacterial ribosomal protein bL28 family.

This is Large ribosomal subunit protein bL28 from Sulfurimonas denitrificans (strain ATCC 33889 / DSM 1251) (Thiomicrospira denitrificans (strain ATCC 33889 / DSM 1251)).